Here is an 816-residue protein sequence, read N- to C-terminus: Phosphatidylinositol 4-kinase beta (816 aa).

Disordered stretches follow at residues Met1–Leu30, Glu101–Arg120, and Ala248–Ser318. Position 2 is an N-acetylglycine (Gly2). Residues Gly2–Val68 form an interaction with ACBD3 region. The PIK helical domain occupies Cys52 to Ser242. Ser258 is subject to Phosphoserine. Residue Thr263 is modified to Phosphothreonine. Phosphoserine occurs at positions 266, 275, 277, 284, and 294. Composition is skewed to polar residues over residues Asp278–Lys297 and Ser306–Ser318. Phosphoserine is present on Ser428. Position 438 is a phosphothreonine (Thr438). A Phosphoserine modification is found at Ser511. A phosphothreonine mark is found at Thr517 and Thr519. The 267-residue stretch at Glu535–Thr801 folds into the PI3K/PI4K catalytic domain. The G-loop stretch occupies residues Val541–Gly547. Positions Gln668–Asn676 are catalytic loop. The tract at residues His687–Thr711 is activation loop.

The protein belongs to the PI3/PI4-kinase family. Type III PI4K subfamily. As to quaternary structure, interacts with ARF1 and ARF3 in the Golgi complex, but not with ARF4, ARF5 or ARF6. Interacts with NCS1/FREQ in a calcium-independent manner. Interacts with CALN1/CABP8 and CALN2/CABP7; in a calcium-dependent manner; this interaction competes with NCS1/FREQ binding. Interacts with ACBD3. Interacts with ARMH3, YWHAB, YWHAE, YWHAG, YWHAH, YWHAQ, YWHAZ and SFN. Interacts with GGA2 (via VHS domain); the interaction is important for PI4KB location at the Golgi apparatus membrane. Interacts with ATG9A. Mg(2+) is required as a cofactor. Mn(2+) serves as cofactor.

The protein localises to the endomembrane system. It localises to the mitochondrion outer membrane. Its subcellular location is the rough endoplasmic reticulum membrane. It is found in the golgi apparatus. The protein resides in the golgi apparatus membrane. It carries out the reaction a 1,2-diacyl-sn-glycero-3-phospho-(1D-myo-inositol) + ATP = a 1,2-diacyl-sn-glycero-3-phospho-(1D-myo-inositol 4-phosphate) + ADP + H(+). Its activity is regulated as follows. Inhibited by wortmannin. Increased kinase activity upon interaction with NCS1/FREQ. Phosphorylates phosphatidylinositol (PI) in the first committed step in the production of the second messenger inositol-1,4,5,-trisphosphate (PIP). May regulate Golgi disintegration/reorganization during mitosis, possibly via its phosphorylation. Involved in Golgi-to-plasma membrane trafficking. The polypeptide is Phosphatidylinositol 4-kinase beta (PI4KB) (Plecturocebus moloch (Dusky titi monkey)).